Reading from the N-terminus, the 60-residue chain is LKCNKLIPPFWKTCPKGKNLCYKMYMVSTLTVPVKRGCIDVCPKNSALVKYVCCNTNKCN.

4 cysteine pairs are disulfide-bonded: Cys3-Cys21, Cys14-Cys38, Cys42-Cys53, and Cys54-Cys59.

This sequence belongs to the three-finger toxin family. Short-chain subfamily. Type IA cytotoxin sub-subfamily. Monomer in solution; Homodimer and oligomer in the presence of negatively charged lipids forming a pore with a size ranging between 20 and 30 Angstroms. In terms of tissue distribution, expressed by the venom gland.

Its subcellular location is the secreted. The protein resides in the target cell membrane. Its function is as follows. Shows cytolytic activity on many different cells by forming pore in lipid membranes. In vivo, increases heart rate or kills the animal by cardiac arrest. In addition, it binds to heparin with high affinity, interacts with Kv channel-interacting protein 1 (KCNIP1) in a calcium-independent manner, and binds to integrin alpha-V/beta-3 (ITGAV/ITGB3) with moderate affinity. The sequence is that of Cytotoxin 4 from Naja annulifera (Banded Egyptian cobra).